Reading from the N-terminus, the 77-residue chain is Exodeoxyribonuclease 7 small subunit (77 aa).

It belongs to the XseB family. Heterooligomer composed of large and small subunits.

Its subcellular location is the cytoplasm. It catalyses the reaction Exonucleolytic cleavage in either 5'- to 3'- or 3'- to 5'-direction to yield nucleoside 5'-phosphates.. Its function is as follows. Bidirectionally degrades single-stranded DNA into large acid-insoluble oligonucleotides, which are then degraded further into small acid-soluble oligonucleotides. The sequence is that of Exodeoxyribonuclease 7 small subunit from Alkaliphilus oremlandii (strain OhILAs) (Clostridium oremlandii (strain OhILAs)).